A 585-amino-acid chain; its full sequence is Protein-lysine N-methyltransferase EFM1 (585 aa).

The region spanning 23–281 (PKISFRITED…AQDELFNNYG (259 aa)) is the SET domain. An S-adenosyl-L-methionine-binding site is contributed by Y280.

This sequence belongs to the class V-like SAM-binding methyltransferase superfamily. RKM1 family.

Its subcellular location is the cytoplasm. S-adenosyl-L-methionine-dependent protein-lysine N-methyltransferase that monomethylates elongation factor 1-alpha (TEF1/TEF2) at 'Lys-30'. The protein is Protein-lysine N-methyltransferase EFM1 of Saccharomyces cerevisiae (strain ATCC 204508 / S288c) (Baker's yeast).